A 999-amino-acid chain; its full sequence is MGPAPLPLLLGLFLPALWRRAITEAREEAKPYPLFPGPFPGSLQTDHTPLLSLPHASGYQPALMFSPTQPGRPHTGNVAIPQVTSVESKPLPPLAFKHTVGHIILSEHKGVKFNCSISVPNIYQDTTISWWKDGKELLGAHHAITQFYPDDEVTAIIASFSITSVQRSDNGSYICKMKINNEEIVSDPIYIEVQGLPHFTKQPESMNVTRNTAFNLTCQAVGPPEPVNIFWVQNSSRVNEQPEKSPSVLTVPGLTEMAVFSCEAHNDKGLTVSKGVQINIKAIPSPPTEVSIRNSTAHSILISWVPGFDGYSPFRNCSIQVKEADPLSNGSVMIFNTSALPHLYQIKQLQALANYSIGVSCMNEIGWSAVSPWILASTTEGAPSVAPLNVTVFLNESSDNVDIRWMKPPTKQQDGELVGYRISHVWQSAGISKELLEEVGQNGSRARISVQVHNATCTVRIAAVTRGGVGPFSDPVKIFIPAHGWVDYAPSSTPAPGNADPVLIIFGCFCGFILIGLILYISLAIRKRVQETKFGNAFTEEDSELVVNYIAKKSFCRRAIELTLHSLGVSEELQNKLEDVVIDRNLLILGKILGEGEFGSVMEGNLKQEDGTSLKVAVKTMKLDNSSQREIEEFLSEAACMKDFSHPNVIRLLGVCIEMSSQGIPKPMVILPFMKYGDLHTYLLYSRLETGPKHIPLQTLLKFMVDIALGMEYLSNRNFLHRDLAARNCMLRDDMTVCVADFGLSKKIYSGDYYRQGRIAKMPVKWIAIESLADRVYTSKSDVWAFGVTMWEIATRGMTPYPGVQNHEMYDYLLHGHRLKQPEDCLDELYEIMYSCWRTDPLDRPTFSVLRLQLEKLLESLPDVRNQADVIYVNTQLLESSEGLAQGSTLAPLDLNIDPDSIIASCTPRAAISVVTAEVHDSKPHEGRYILNGGSEEWEDLTSAPSAAVTAEKNSVLPGERLVRNGVSWSHSSMLPLGSSLPDELLFADDSSEGSEVLM.

An N-terminal signal peptide occupies residues 1-20; the sequence is MGPAPLPLLLGLFLPALWRR. The Extracellular segment spans residues 21-505; sequence AITEAREEAK…PGNADPVLII (485 aa). Ig-like C2-type domains are found at residues 81–186 and 197–273; these read PQVT…EIVS and PHFT…LTVS. Residues Asn-114, Asn-170, Asn-207, Asn-215, Asn-234, Asn-294, Asn-316, Asn-329, Asn-336, Asn-354, Asn-389, Asn-395, Asn-442, and Asn-454 are each glycosylated (N-linked (GlcNAc...) asparagine). Cys-115 and Cys-175 are disulfide-bonded. Cys-218 and Cys-262 form a disulfide bridge. Fibronectin type-III domains are found at residues 286–381 and 386–484; these read PPTE…TTEG and APLN…PAHG. A helical membrane pass occupies residues 506–526; that stretch reads FGCFCGFILIGLILYISLAIR. Topologically, residues 527–999 are cytoplasmic; sequence KRVQETKFGN…DSSEGSEVLM (473 aa). Ser-543 carries the phosphoserine modification. The 272-residue stretch at 587-858 folds into the Protein kinase domain; the sequence is LILGKILGEG…VLRLQLEKLL (272 aa). Residues 593–601 and Lys-615 contribute to the ATP site; that span reads LGEGEFGSV. Asp-723 functions as the Proton acceptor in the catalytic mechanism. 4 positions are modified to phosphotyrosine; by autocatalysis: Tyr-749, Tyr-753, Tyr-754, and Tyr-872. Phosphoserine is present on Ser-935.

The protein belongs to the protein kinase superfamily. Tyr protein kinase family. AXL/UFO subfamily. Interacts (upon activation) with TNK2; stimulates TNK2 autophosphorylation. Interacts (via N-terminus) with extracellular ligands LGALS3, TUB, TULP1 and GAS6. Interacts with VAV1 in a phosphotyrosine-independent manner. Interacts with TIMD4; this interaction enhances TIMD4-mediated efferocytosis. In terms of processing, autophosphorylated on Tyr-749, Tyr-753 and Tyr-754 in the activation loop allowing full activity. Autophosphorylated on Tyr-872 leading to recruitment of downstream partners of the signaling cascade such as PLCG2. Not expressed in normal B- and T-lymphocytes but is expressed in numerous neoplastic B- and T-cell lines. Highly expressed in testis, ovary, prostate, lung, and kidney, with lower expression in spleen, small intestine, colon, and liver.

The protein localises to the cell membrane. It carries out the reaction L-tyrosyl-[protein] + ATP = O-phospho-L-tyrosyl-[protein] + ADP + H(+). Functionally, receptor tyrosine kinase that transduces signals from the extracellular matrix into the cytoplasm by binding to several ligands including LGALS3, TUB, TULP1 or GAS6. Regulates many physiological processes including cell survival, migration, differentiation, and phagocytosis of apoptotic cells (efferocytosis). Ligand binding at the cell surface induces autophosphorylation of MERTK on its intracellular domain that provides docking sites for downstream signaling molecules. Following activation by ligand, interacts with GRB2 or PLCG2 and induces phosphorylation of MAPK1, MAPK2, FAK/PTK2 or RAC1. MERTK signaling plays a role in various processes such as macrophage clearance of apoptotic cells, platelet aggregation, cytoskeleton reorganization and engulfment. Functions in the retinal pigment epithelium (RPE) as a regulator of rod outer segments fragments phagocytosis. Also plays an important role in inhibition of Toll-like receptors (TLRs)-mediated innate immune response by activating STAT1, which selectively induces production of suppressors of cytokine signaling SOCS1 and SOCS3. The sequence is that of Tyrosine-protein kinase Mer (MERTK) from Homo sapiens (Human).